We begin with the raw amino-acid sequence, 351 residues long: DNA polymerase IV (351 aa).

Residues 4–185 (IIHVDMDCFF…LPLAKIPGVG (182 aa)) enclose the UmuC domain. 2 residues coordinate Mg(2+): aspartate 8 and aspartate 103. Residue glutamate 104 is part of the active site.

This sequence belongs to the DNA polymerase type-Y family. Monomer. It depends on Mg(2+) as a cofactor.

It localises to the cytoplasm. It catalyses the reaction DNA(n) + a 2'-deoxyribonucleoside 5'-triphosphate = DNA(n+1) + diphosphate. In terms of biological role, poorly processive, error-prone DNA polymerase involved in untargeted mutagenesis. Copies undamaged DNA at stalled replication forks, which arise in vivo from mismatched or misaligned primer ends. These misaligned primers can be extended by PolIV. Exhibits no 3'-5' exonuclease (proofreading) activity. May be involved in translesional synthesis, in conjunction with the beta clamp from PolIII. This is DNA polymerase IV from Salmonella paratyphi B (strain ATCC BAA-1250 / SPB7).